A 499-amino-acid chain; its full sequence is Bifunctional purine biosynthesis protein PurH (499 aa).

An MGS-like domain is found at 1–144 (MIKRALISVF…KNFKDVVVLT (144 aa)).

Belongs to the PurH family.

The enzyme catalyses (6R)-10-formyltetrahydrofolate + 5-amino-1-(5-phospho-beta-D-ribosyl)imidazole-4-carboxamide = 5-formamido-1-(5-phospho-D-ribosyl)imidazole-4-carboxamide + (6S)-5,6,7,8-tetrahydrofolate. It carries out the reaction IMP + H2O = 5-formamido-1-(5-phospho-D-ribosyl)imidazole-4-carboxamide. It participates in purine metabolism; IMP biosynthesis via de novo pathway; 5-formamido-1-(5-phospho-D-ribosyl)imidazole-4-carboxamide from 5-amino-1-(5-phospho-D-ribosyl)imidazole-4-carboxamide (10-formyl THF route): step 1/1. It functions in the pathway purine metabolism; IMP biosynthesis via de novo pathway; IMP from 5-formamido-1-(5-phospho-D-ribosyl)imidazole-4-carboxamide: step 1/1. The chain is Bifunctional purine biosynthesis protein PurH from Clostridium botulinum (strain Okra / Type B1).